We begin with the raw amino-acid sequence, 565 residues long: Peptide transport periplasmic protein SapA (565 aa).

Positions 1 to 23 (MLRLNLRFLSFLLCIIQSVELQA) are cleaved as a signal peptide.

This sequence belongs to the bacterial solute-binding protein 5 family.

It localises to the periplasm. In terms of biological role, involved in a peptide intake transport system that plays a role in the resistance to antimicrobial peptides. This is Peptide transport periplasmic protein SapA (sapA) from Haemophilus influenzae (strain ATCC 51907 / DSM 11121 / KW20 / Rd).